The primary structure comprises 423 residues: UDP-N-acetylglucosamine 1-carboxyvinyltransferase (423 aa).

22 to 23 (KN) serves as a coordination point for phosphoenolpyruvate. Arginine 93 contacts UDP-N-acetyl-alpha-D-glucosamine. Cysteine 117 serves as the catalytic Proton donor. 2-(S-cysteinyl)pyruvic acid O-phosphothioketal is present on cysteine 117. 2 residues coordinate UDP-N-acetyl-alpha-D-glucosamine: aspartate 305 and isoleucine 327.

It belongs to the EPSP synthase family. MurA subfamily.

It localises to the cytoplasm. It catalyses the reaction phosphoenolpyruvate + UDP-N-acetyl-alpha-D-glucosamine = UDP-N-acetyl-3-O-(1-carboxyvinyl)-alpha-D-glucosamine + phosphate. It participates in cell wall biogenesis; peptidoglycan biosynthesis. Its function is as follows. Cell wall formation. Adds enolpyruvyl to UDP-N-acetylglucosamine. The sequence is that of UDP-N-acetylglucosamine 1-carboxyvinyltransferase from Acidithiobacillus ferrooxidans (strain ATCC 23270 / DSM 14882 / CIP 104768 / NCIMB 8455) (Ferrobacillus ferrooxidans (strain ATCC 23270)).